The following is a 269-amino-acid chain: Phosphonoacetaldehyde hydrolase (269 aa).

D10 serves as the catalytic Nucleophile. Mg(2+)-binding residues include D10 and A12. The active-site Schiff-base intermediate with substrate is the K52. D186 is a Mg(2+) binding site.

This sequence belongs to the HAD-like hydrolase superfamily. PhnX family. Homodimer. The cofactor is Mg(2+).

The catalysed reaction is phosphonoacetaldehyde + H2O = acetaldehyde + phosphate + H(+). Involved in phosphonate degradation. This Salmonella agona (strain SL483) protein is Phosphonoacetaldehyde hydrolase.